A 55-amino-acid polypeptide reads, in one-letter code: Large ribosomal subunit protein bL33 (55 aa).

The protein belongs to the bacterial ribosomal protein bL33 family.

The chain is Large ribosomal subunit protein bL33 from Gluconobacter oxydans (strain 621H) (Gluconobacter suboxydans).